Here is a 115-residue protein sequence, read N- to C-terminus: Large ribosomal subunit protein bL19 (115 aa).

This sequence belongs to the bacterial ribosomal protein bL19 family.

Its function is as follows. This protein is located at the 30S-50S ribosomal subunit interface and may play a role in the structure and function of the aminoacyl-tRNA binding site. This is Large ribosomal subunit protein bL19 from Lacticaseibacillus casei (strain BL23) (Lactobacillus casei).